The sequence spans 111 residues: Putative lipid-binding protein AIR1 (111 aa).

The N-terminal stretch at 1 to 23 (MAPRTPLALFVSLNLLFFTYTSA) is a signal peptide. 3 disulfides stabilise this stretch: cysteine 28/cysteine 58, cysteine 38/cysteine 57, and cysteine 74/cysteine 110.

Belongs to the plant LTP family. PEARLI1 subfamily.

Its subcellular location is the secreted. This chain is Putative lipid-binding protein AIR1 (AIR1), found in Arabidopsis thaliana (Mouse-ear cress).